The chain runs to 782 residues: Chondroitin proteoglycan 4 (782 aa).

The first 18 residues, 1 to 18, serve as a signal peptide directing secretion; the sequence is MRLVYSLIFLLFIPFSHP. N-linked (GlcNAc...) asparagine glycosylation is found at Asn76, Asn208, Asn462, Asn468, Asn474, and Asn503. Positions 513–726 are disordered; sequence ISEKSTEESS…EDQGSGNYKK (214 aa). Composition is skewed to low complexity over residues 520–532, 548–566, 573–612, 662–672, and 688–722; these read ESSG…SGDG, SGSS…SSGE, SSGS…SSDT, FGESSGSSGES, and SGSS…QGSG. Asn559 carries an N-linked (GlcNAc...) asparagine glycan. A glycan (O-linked (Xyl...) (chondroitin sulfate) serine) is linked at Ser691. Asn699 carries an N-linked (GlcNAc...) asparagine glycan. O-linked (Xyl...) (chondroitin sulfate) serine glycosylation is found at Ser701, Ser704, Ser708, Ser714, and Ser721. Residue Asn743 is glycosylated (N-linked (GlcNAc...) asparagine).

The chain is Chondroitin proteoglycan 4 from Caenorhabditis elegans.